The chain runs to 156 residues: MTTVVSRTFRSSPHRDALQTWDAIVELLTQGKDGTARSELRAVTGVAASLIADQAPKSAPIVATCDGPRTRIYCLFDEDAIDGDDANEEVLGFEPLKGDWGVSLPCPKEQLGWVQSALKKHSSRIIARDLSQGIATQAQADAGQALSLDLGGFLKS.

Belongs to the bacterial HORMA family. HORMA3 subfamily. As to quaternary structure, interacts with Cap7 (also called HORMA2) and CdnC; forms CdnD:Cap7:Cap8 (also called CdnD:HORMA2:HORMA3) complexes with stoichiometries of 1:1:1 and 2:1:1.

CBASS (cyclic oligonucleotide-based antiphage signaling system) provides immunity against bacteriophage. The CD-NTase protein synthesizes cyclic nucleotides in response to infection; these serve as specific second messenger signals. The signals activate a diverse range of effectors, leading to bacterial cell death and thus abortive phage infection. A type III-C(AAA) CBASS system. Functionally, a member of the CBASS system in this bacteria. It does not seem to bind a closure peptide, its exact function is unknown. This chain is CD-NTase-associated protein 8, found in Pseudomonas aeruginosa.